The following is a 130-amino-acid chain: Protein ApaG (130 aa).

The ApaG domain occupies 3 to 127 (RALTRDIEVV…FSLDSPGLLR (125 aa)). The interval 63 to 83 (EVTGPGVVGEQPRLSPGDTYE) is disordered.

The chain is Protein ApaG from Rhizobium etli (strain ATCC 51251 / DSM 11541 / JCM 21823 / NBRC 15573 / CFN 42).